The primary structure comprises 1049 residues: Desmoglein-1 (1049 aa).

The N-terminal stretch at 1-23 (MDWSFFRVVAMLFIFLVVVEVNS) is a signal peptide. Positions 24–49 (EFRIQVRDYNTKNGTIKWHSIRRQKR) are excised as a propeptide. Residues asparagine 36, asparagine 110, and asparagine 180 are each glycosylated (N-linked (GlcNAc...) asparagine). Cadherin domains lie at 50–158 (EWIK…PVFS), 159–270 (MATF…PYME), 271–385 (QSSY…GPVF), and 386–497 (RPGS…TEPN). Residues 50 to 548 (EWIKFAAACR…LLSDNVHFGP (499 aa)) lie on the Extracellular side of the membrane. A disordered region spans residues 485–534 (SFGNDDRTNTEPNTKITTNTGRQESTSSTNYDTSTTSTDSSQVYSSEPGN). A compositionally biased stretch (polar residues) spans 494–508 (TEPNTKITTNTGRQE). Residues 509–530 (STSSTNYDTSTTSTDSSQVYSS) are compositionally biased toward low complexity. The chain crosses the membrane as a helical span at residues 549–569 (AGIGLLIMGFLVLGLVPFLMI). Topologically, residues 570–1049 (CCDCGGAPRS…TKYSTVQYSK (480 aa)) are cytoplasmic. Serine 579 bears the Phosphoserine mark. 5 Desmoglein repeat repeats span residues 813–839 (TYPS…TVTE), 840–869 (SYTT…ERVV), 870–899 (GPIS…ERVI), 900–927 (APSS…ERVI), and 928–956 (QPTS…ERVV). The interval 1014–1035 (HMRSSSDHHFNQTIGSASPSTA) is disordered. Positions 1024–1035 (NQTIGSASPSTA) are enriched in polar residues.

In terms of assembly, binds to JUP/plakoglobin. Interacts with PKP2. Interacts with DSC3; there is evidence to suggest that the interaction promotes cell-cell adhesion of keratinocytes. As to quaternary structure, (Microbial infection) Interacts with Staphylococcus aureus protein SdrD; this interaction increases S.aureus adherence to keratinocytes. As to expression, expressed in all suprabasal layers of the epidermis, with the highest expression seen in the granular layer (at protein level).

The protein localises to the cell membrane. The protein resides in the cell junction. It is found in the desmosome. It localises to the cytoplasm. Its subcellular location is the nucleus. Functionally, component of intercellular desmosome junctions. Involved in the interaction of plaque proteins and intermediate filaments mediating cell-cell adhesion. The protein is Desmoglein-1 (DSG1) of Homo sapiens (Human).